The sequence spans 469 residues: MAITRFAPSPTGYLHIGGLRTSLYSYLWARKTGGEFRLRIEDTDLARNSEEAMKAIIDAFDWVGLNYDGEVFYQSKRTDIYKQYIDKLLESGNAYKCYMSKEELDALRAAQEAAKQTPRYDGTWRPEPGKELPPVPAGVEPVIRIKAPTTGTIEFDDGVKGHMKFDANQVDDYVIARSNGMPTYNFVVAIDDALMGMTDVIRGDDHLSNTPKQIVVYNALGFKVPKFYHVPMINNPEGKKLSKRDGAMDVMDYKRLGYLPEALLNFLVRLGWSNGDQEIFSMKEMLELFDPSNINKSASSYNGEKLLWLNSEYIKAVSNERLIEELKFFDLDLSNYPKKNEILDLAKQRAQTLVELKKSITDIIDIPTSYEESGVKKFIKEDTKELLEKYLLLLESNKNSLDSVEKIEEFTKPFINDNGLKFPQLFQPIRIALTGGTQAPSVYDIIFILGYDEIFKRINEALKRNFQNT.

Positions 8 to 18 match the 'HIGH' region motif; that stretch reads PSPTGYLHIGG. The disordered stretch occupies residues 117–137; that stretch reads TPRYDGTWRPEPGKELPPVPA. The short motif at 240-244 is the 'KMSKS' region element; that stretch reads KLSKR. Residue Lys-243 participates in ATP binding.

Belongs to the class-I aminoacyl-tRNA synthetase family. Glutamate--tRNA ligase type 1 subfamily. As to quaternary structure, monomer.

The protein localises to the cytoplasm. The catalysed reaction is tRNA(Glu) + L-glutamate + ATP = L-glutamyl-tRNA(Glu) + AMP + diphosphate. In terms of biological role, catalyzes the attachment of glutamate to tRNA(Glu) in a two-step reaction: glutamate is first activated by ATP to form Glu-AMP and then transferred to the acceptor end of tRNA(Glu). This is Glutamate--tRNA ligase 1 from Aliarcobacter butzleri (strain RM4018) (Arcobacter butzleri).